We begin with the raw amino-acid sequence, 307 residues long: MERVHLFFHREQLKRKGTAKGLFVTDRSVSPILLTQRDRAEKASYEISWEKSLLGERTLFLNAEQDDPSLMRRRLAYCFFDQIGVPAPVASYSFLTINGQPEGIYLNIKNHQPAGKRSYGVKTADPRVPLSLFNNDSSAFLHEFFILIRTAGDDELAERIKLYLDVKLFFLWLIGNTCTNQGFYYTFCLNESGRLYVSPMETRSLAVQEWYEEDPLLTKGKTLSSRLLSIPAFRSQYHTLMKNVLKRSFTIERLSPLINEWHLDICQSAADDPFIKKSPFQIEKEQTNILREIEERQDFLQAHLARL.

This sequence belongs to the CotH family.

Its subcellular location is the spore coat. Involved in the assembly of several proteins in the inner and outer layer of the spore coat. The chain is Inner spore coat protein H-like protein (yisJ) from Bacillus subtilis (strain 168).